The sequence spans 843 residues: Aconitase AMT8-2 (843 aa).

258–260 (DSH) provides a ligand contact to substrate. 3 residues coordinate [4Fe-4S] cluster: Cys450, Cys513, and Cys516. Residues Arg536, Arg541, and 712-713 (SR) contribute to the substrate site.

The protein belongs to the aconitase/IPM isomerase family.

Its pathway is mycotoxin biosynthesis. Functionally, aconitase; part of the gene clusters that mediate the biosynthesis of AM-toxins, host-selective toxins (HSTs) causing Alternaria blotch on apple, a worldwide distributed disease. AM-toxins are cyclic depsipeptides containing the 3 residues 2-hydroxy-isovaleric acid (2-HIV), dehydroalanine, L-alanine which are common for all 3 AM-toxins I to III. The fourth precursor is L-alpha-amino-methoxyphenyl-valeric acid (L-Amv) for AM-toxin I, L-alpha-amino-phenyl-valeric acid (L-Apv) for AM-toxin II, and L-alpha-amino-hydroxyphenyl-valeric acid (L-Ahv) for AM-toxin III. AM-toxins have two target sites for affecting susceptible apple cells; they cause invagination of the plasma membrane and electrolyte loss and chloroplast disorganization. The non-ribosomal peptide synthetase AMT1 contains 4 catalytic modules and is responsible for activation of each residue in AM-toxin. The aldo-keto reductase AMT2 catalyzes the conversion of 2-keto-isovaleric acid (2-KIV) to 2-hydroxy-isovaleric acid (2-HIV), one of the precursor residues incorporated by AMT1 during AM-toxin biosynthesis, by reduction of its ketone to an alcohol. The cytochrome P450 monooxygenase AMT3 and the thioesterase AMT4 are also important for AM-toxin production, but their exact function within the AM-toxin biosynthesis are not known yet. Up to 21 proteins (including AMT1 to AMT4) are predicted to be involved in AM-toxin biosynthesis since their expression ishighly up-regulated in AM-toxin-producing cultures. The protein is Aconitase AMT8-2 of Alternaria alternata (Alternaria rot fungus).